The primary structure comprises 133 residues: Large ribosomal subunit protein bL20 (133 aa).

Belongs to the bacterial ribosomal protein bL20 family.

Binds directly to 23S ribosomal RNA and is necessary for the in vitro assembly process of the 50S ribosomal subunit. It is not involved in the protein synthesizing functions of that subunit. In Bartonella bacilliformis (strain ATCC 35685 / KC583 / Herrer 020/F12,63), this protein is Large ribosomal subunit protein bL20.